The chain runs to 510 residues: MIWHVQNENFILDSTRIFMKAFHLPLFDGSFIFPECILIFGLILLLMIDSTSDQKDISWFYFISSTSLVMSITALLFRWREEPMISFSGNFQTNNFNEIFQFLILLCSTLCIPLSVEYIECTEMAITEFLLFILTATLGGMFLCGANDLITIFVALECFSLCSYLLSGYTKKDVRSNEATTKYLLMGGASSSILVHGFSWLYGSSGGEIELQEIVNGLINTQMYNSPGILIALLFITVGIGFKLSPAPSHQWTPDVYEGSPTPVVAFLSVTSKVAASASATRIFDIPFYFSSNEWHLLLEILAILSMILGNLIAITQTSMKRMLAYSSIGQIGYVIIGIIVGDSNGGYASMITYMLFYISMNLGTFACIVSFGLRTGTDNIRDYAGLYTKDPYLALSLALCLLSLGGLPPLSGFFGKLHLFWCGWQAGLYFLVSIGLLTSVVSIYYYLKIIKLLMTGRNQEITPHVRNYRRPPLRSNNSIELSMIVCVIASTIPGISMNPIIEIAQDTLF.

13 consecutive transmembrane segments (helical) span residues 26–46 (LFDG…ILLL), 57–77 (ISWF…ALLF), 99–119 (IFQF…VEYI), 124–144 (MAIT…MFLC), 149–169 (LITI…LSGY), 183–203 (YLLM…WLYG), 227–247 (PGIL…LSPA), 295–315 (WHLL…LIAI), 323–343 (MLAY…IVGD), 354–374 (YMLF…SFGL), 395–415 (ALSL…SGFF), 418–438 (LHLF…IGLL), and 482–502 (LSMI…NPII).

It belongs to the complex I subunit 2 family. In terms of assembly, NDH is composed of at least 16 different subunits, 5 of which are encoded in the nucleus.

Its subcellular location is the plastid. It is found in the chloroplast thylakoid membrane. The catalysed reaction is a plastoquinone + NADH + (n+1) H(+)(in) = a plastoquinol + NAD(+) + n H(+)(out). The enzyme catalyses a plastoquinone + NADPH + (n+1) H(+)(in) = a plastoquinol + NADP(+) + n H(+)(out). In terms of biological role, NDH shuttles electrons from NAD(P)H:plastoquinone, via FMN and iron-sulfur (Fe-S) centers, to quinones in the photosynthetic chain and possibly in a chloroplast respiratory chain. The immediate electron acceptor for the enzyme in this species is believed to be plastoquinone. Couples the redox reaction to proton translocation, and thus conserves the redox energy in a proton gradient. The protein is NAD(P)H-quinone oxidoreductase subunit 2 A, chloroplastic of Glycine max (Soybean).